The primary structure comprises 68 residues: Large ribosomal subunit protein uL29 (68 aa).

The protein belongs to the universal ribosomal protein uL29 family.

In Streptococcus agalactiae serotype Ia (strain ATCC 27591 / A909 / CDC SS700), this protein is Large ribosomal subunit protein uL29.